The sequence spans 494 residues: MQISKAALLASLAALVYAQPVTLFKRETNADKWRSQSIYQIVTDRFARTDGDTSASCNTEDRLYCGGSFQGIIKKLDYIKDMGFTAIWISPVVENIPDNTAYGYAYHGYWMKNIYKINENFGTADDLKSLAQELHDRDMLLMVDIVTNHYGSDGSGDSIDYSEYTPFNDQKYFHNYCLISNYDDQAQVQSCWEGDSSVALPDLRTEDSDVASVFNSWVKDFVGNYSIDGLRIDSAKHVDQGFFPDFVSASGVYSVGEVFQGDPAYTCPYQNYIPGVSNYPLYYPTTRFFKTTDSSSSELTQMISSVASSCSDPTLLTNFVENHDNERFASMTSDQSLISNAIAFVLLGDGIPVIYYGQEQGLSGKSDPNNREALWLSGYNKESDYYKLIAKANAARNAAVYQDSSYATSQLSVIFSNDHVIATKRGSVVSVFNNLGSSGSSDVTISNTGYSSGEDLVEVLTCSTVSGSSDLQVSIQGGQPQIFVPAKYASDICS.

The first 26 residues, 1–26, serve as a signal peptide directing secretion; sequence MQISKAALLASLAALVYAQPVTLFKR. The cysteines at positions 57 and 65 are disulfide-linked. Trp110 provides a ligand contact to substrate. Residue Asn148 coordinates Ca(2+). His149 is a binding site for substrate. Cysteines 177 and 191 form a disulfide. Asp202 contributes to the Ca(2+) binding site. The N-linked (GlcNAc...) asparagine glycan is linked to Asn224. Arg231 contributes to the substrate binding site. Positions 233, 237, and 257 each coordinate Ca(2+). Residue Asp233 is the Nucleophile of the active site. 236-237 is a substrate binding site; sequence KH. The Proton donor role is filled by Glu257. Gly261 is a binding site for substrate. Cys267 and Cys310 are joined by a disulfide. Substrate is bound by residues Asp324 and Arg371. Cys462 and Cys493 are disulfide-bonded.

The protein belongs to the glycosyl hydrolase 13 family. The cofactor is Ca(2+).

Its subcellular location is the secreted. The enzyme catalyses Endohydrolysis of (1-&gt;4)-alpha-D-glucosidic linkages in polysaccharides containing three or more (1-&gt;4)-alpha-linked D-glucose units.. In Saccharomycopsis fibuligera (Yeast), this protein is Alpha-amylase (ALP1).